We begin with the raw amino-acid sequence, 165 residues long: UPF0114 protein ESA_00283 (165 aa).

Helical transmembrane passes span 15 to 35 (LLAP…VKFF), 53 to 73 (LILL…LVMV), and 136 to 156 (LMWY…MGYL).

The protein belongs to the UPF0114 family.

Its subcellular location is the cell membrane. This Cronobacter sakazakii (strain ATCC BAA-894) (Enterobacter sakazakii) protein is UPF0114 protein ESA_00283.